The primary structure comprises 335 residues: MATIHRPRRGSLAFSPRKRAKSEVPRIRSWVADERAGMAGFAGYKAGMTHVIMIDDRPRSLTEGMEISVPVTVVEVPPMSVAALRVYEPYNGGIRPAGELWAENLSQDLERAITIPKARRGASLEDIESRVDELCEIRVLAHTNPRLLTGVPKKVPDIMEIPVTGRSVEEQLKAAEGLLGSQVAVSNIFNVGEWIDVSAVTKGKGTQGPVKRWGIMLQKRKHSRTGKLRHVGNLGPWHPARISWRVPQLGQTGYHQRTEFNKRIMAIGTNGTDITPDGGFVGYGVVRNEYMLIKGSVPGPVKRLVRMRRAIRPGAAFAPKAPQILYVSKESKQGV.

Positions 1–20 are disordered; the sequence is MATIHRPRRGSLAFSPRKRA.

This sequence belongs to the universal ribosomal protein uL3 family. As to quaternary structure, part of the 50S ribosomal subunit. Forms a cluster with proteins L14 and L24e.

Functionally, one of the primary rRNA binding proteins, it binds directly near the 3'-end of the 23S rRNA, where it nucleates assembly of the 50S subunit. The chain is Large ribosomal subunit protein uL3 from Methanothrix thermoacetophila (strain DSM 6194 / JCM 14653 / NBRC 101360 / PT) (Methanosaeta thermophila).